The primary structure comprises 555 residues: Aerobic glycerol-3-phosphate dehydrogenase (555 aa).

An FAD-binding site is contributed by 24-52; it reads DLFIIGGGITGAGTALDAASRGMKVALSE.

The protein belongs to the FAD-dependent glycerol-3-phosphate dehydrogenase family. FAD is required as a cofactor.

It localises to the cytoplasm. It catalyses the reaction a quinone + sn-glycerol 3-phosphate = dihydroxyacetone phosphate + a quinol. It functions in the pathway polyol metabolism; glycerol degradation via glycerol kinase pathway; glycerone phosphate from sn-glycerol 3-phosphate (aerobic route): step 1/1. The sequence is that of Aerobic glycerol-3-phosphate dehydrogenase (glpD) from Bacillus subtilis (strain 168).